We begin with the raw amino-acid sequence, 86 residues long: Neurotoxin-like protein NTL2 (86 aa).

Positions 1 to 21 (MKTLLLSLVVVTIVCLDLGYT) are cleaved as a signal peptide. 4 disulfide bridges follow: Cys-24/Cys-45, Cys-38/Cys-63, Cys-67/Cys-78, and Cys-79/Cys-84.

This sequence belongs to the three-finger toxin family. Short-chain subfamily. Orphan group I sub-subfamily. In terms of tissue distribution, expressed by the venom gland.

It is found in the secreted. This chain is Neurotoxin-like protein NTL2, found in Naja atra (Chinese cobra).